The chain runs to 638 residues: Mediator of RNA polymerase II transcription subunit 17 (638 aa).

Positions 1–21 are disordered; sequence MSDSFNLPLRPLTEKRERPDP.

It belongs to the Mediator complex subunit 17 family. Component of the Mediator complex.

It localises to the nucleus. Functionally, component of the Mediator complex, a coactivator involved in the regulated transcription of nearly all RNA polymerase II-dependent genes. Mediator functions as a bridge to convey information from gene-specific regulatory proteins to the basal RNA polymerase II transcription machinery. Mediator is recruited to promoters by direct interactions with regulatory proteins and serves as a scaffold for the assembly of a functional preinitiation complex with RNA polymerase II and the general transcription factors. The polypeptide is Mediator of RNA polymerase II transcription subunit 17 (srb4) (Aspergillus oryzae (strain ATCC 42149 / RIB 40) (Yellow koji mold)).